Here is a 137-residue protein sequence, read N- to C-terminus: Putative pumilio homolog 25 (137 aa).

Pumilio repeat units follow at residues 70-105 and 108-137; these read EFDS…LPHS and SVLV…TRLA.

The protein resides in the cytoplasm. In terms of biological role, sequence-specific RNA-binding protein that regulates translation and mRNA stability by binding the 3'-UTR of target mRNAs. This chain is Putative pumilio homolog 25 (APUM25), found in Arabidopsis thaliana (Mouse-ear cress).